The primary structure comprises 137 residues: Cellular retinoic acid-binding protein 1 (137 aa).

The short motif at Lys21–Lys31 is the Nuclear localization signal element. Residue Arg132–Tyr134 participates in all-trans-retinoate binding.

Belongs to the calycin superfamily. Fatty-acid binding protein (FABP) family.

It is found in the cytoplasm. In terms of biological role, cytosolic CRABPs may regulate the access of retinoic acid to the nuclear retinoic acid receptors. This chain is Cellular retinoic acid-binding protein 1 (CRABP1), found in Gallus gallus (Chicken).